A 291-amino-acid polypeptide reads, in one-letter code: 4-hydroxy-tetrahydrodipicolinate synthase (291 aa).

T47 provides a ligand contact to pyruvate. Y136 serves as the catalytic Proton donor/acceptor. K164 (schiff-base intermediate with substrate) is an active-site residue. I206 provides a ligand contact to pyruvate.

Belongs to the DapA family. Homotetramer; dimer of dimers.

The protein resides in the cytoplasm. It catalyses the reaction L-aspartate 4-semialdehyde + pyruvate = (2S,4S)-4-hydroxy-2,3,4,5-tetrahydrodipicolinate + H2O + H(+). It functions in the pathway amino-acid biosynthesis; L-lysine biosynthesis via DAP pathway; (S)-tetrahydrodipicolinate from L-aspartate: step 3/4. In terms of biological role, catalyzes the condensation of (S)-aspartate-beta-semialdehyde [(S)-ASA] and pyruvate to 4-hydroxy-tetrahydrodipicolinate (HTPA). The sequence is that of 4-hydroxy-tetrahydrodipicolinate synthase from Leuconostoc citreum (strain KM20).